Here is a 489-residue protein sequence, read N- to C-terminus: Aspartate/glutamate permease AcaP (489 aa).

A run of 12 helical transmembrane segments spans residues Ile-6 to Val-26, Val-36 to Gly-56, Val-91 to Val-111, Met-122 to Ser-142, Ile-152 to Ile-172, Ile-195 to Gly-215, Phe-238 to Ile-258, Leu-290 to Ile-310, Gly-342 to Gly-362, Asn-373 to Leu-393, Ala-413 to Val-433, and Leu-449 to Ile-469.

This sequence belongs to the amino acid-polyamine-organocation (APC) superfamily. Glutamate:GABA antiporter (GGA) (TC 2.A.3.7) family.

It localises to the cell membrane. Its function is as follows. Involved in aspartate and glutamate uptake. Plays no significant role in the excretion of accumulated glutamate. This Lactococcus lactis subsp. cremoris (strain MG1363) protein is Aspartate/glutamate permease AcaP.